A 96-amino-acid polypeptide reads, in one-letter code: MYKDRDVNQRDSRFENQQDGFKKNSNFRFFKRKSCKFCDSGKHPDYKEFDFLKKFITEQGKILPKRITGTSAKHQRRLALEIKRARYMALLPFVKK.

The protein belongs to the bacterial ribosomal protein bS18 family. As to quaternary structure, part of the 30S ribosomal subunit. Forms a tight heterodimer with protein bS6.

Its function is as follows. Binds as a heterodimer with protein bS6 to the central domain of the 16S rRNA, where it helps stabilize the platform of the 30S subunit. The sequence is that of Small ribosomal subunit protein bS18 from Borreliella afzelii (strain PKo) (Borrelia afzelii).